A 230-amino-acid chain; its full sequence is 2,3-bisphosphoglycerate-dependent phosphoglycerate mutase (230 aa).

Substrate is bound by residues R8–N15, T21–G22, R60, E87–Y90, K98, R114–R115, and G183–N184. H9 functions as the Tele-phosphohistidine intermediate in the catalytic mechanism. The Proton donor/acceptor role is filled by E87.

The protein belongs to the phosphoglycerate mutase family. BPG-dependent PGAM subfamily.

The catalysed reaction is (2R)-2-phosphoglycerate = (2R)-3-phosphoglycerate. It participates in carbohydrate degradation; glycolysis; pyruvate from D-glyceraldehyde 3-phosphate: step 3/5. Catalyzes the interconversion of 2-phosphoglycerate and 3-phosphoglycerate. The protein is 2,3-bisphosphoglycerate-dependent phosphoglycerate mutase of Streptococcus gordonii (strain Challis / ATCC 35105 / BCRC 15272 / CH1 / DL1 / V288).